Here is a 408-residue protein sequence, read N- to C-terminus: MPGQTSAVAVLLCLAVILHGYQIREKEFPEARGYLQYTATTTEQITAKPPLPLTNQTSHATLASRSKDDYIQTAAETSTFEDTAHITMKTAIPVTTKSLLPISSTSYTFVRTNNSHMTASSTEDTIGSGSITHLPFPTTRASLAAVNHITGRSTQLGGQTTLPKALFTPSHESTTTQRPTLSTIVSELTPTGKDRSTTSSVPLVPRPTFVTWSSPAKIGTYEVLNGSRLCIKAEMGIALIVQEKGLDSATQRHFNIDPSLTHASGKCGSQNSNLFLNFQGGSVNVTFTKEENLYYVSEVGAYLTISNTEKTYQGKSTMMMFETVVGHSFKCVSEQSIQLSAQLQMKTMNIHLQAFDFEGDSFGIVDECLSDYTVVLPVVGIIVVVLCVVGLGIYKIRQRRQSSAYQRI.

A signal peptide spans 1–20; that stretch reads MPGQTSAVAVLLCLAVILHG. The Lumenal segment spans residues 21-373; it reads YQIREKEFPE…IVDECLSDYT (353 aa). N-linked (GlcNAc...) asparagine glycans are attached at residues asparagine 55 and asparagine 225. A disulfide bond links cysteine 230 and cysteine 267. Asparagine 284 carries an N-linked (GlcNAc...) asparagine glycan. Cysteine 331 and cysteine 368 are oxidised to a cystine. The chain crosses the membrane as a helical span at residues 374–394; it reads VVLPVVGIIVVVLCVVGLGIY. Residues 395–408 are Cytoplasmic-facing; that stretch reads KIRQRRQSSAYQRI.

The protein belongs to the LAMP family. Monomer. Interacts with FURIN.

The protein resides in the cell surface. It is found in the lysosome membrane. It localises to the cytoplasmic vesicle membrane. Its subcellular location is the early endosome membrane. Lysosomal membrane glycoprotein which plays a role in the unfolded protein response (UPR) that contributes to protein degradation and cell survival during proteasomal dysfunction. Plays a role in the process of fusion of the lysosome with the autophagosome, thereby modulating the autophagic process. Promotes hepatocellular lipogenesis through activation of the PI3K/Akt pathway. May also play a role in dendritic cell function and in adaptive immunity. In Rattus norvegicus (Rat), this protein is Lysosome-associated membrane glycoprotein 3 (Lamp3).